A 417-amino-acid polypeptide reads, in one-letter code: Histidinol-phosphate aminotransferase 1, chloroplastic (417 aa).

The N-terminal 40 residues, 1–40, are a transit peptide targeting the chloroplast; it reads MGVINVQGSPSFSIHSSESNLRKSRALKKPFCSIRNRVYC. N-acetylalanine is present on alanine 41. Lysine 277 bears the N6-(pyridoxal phosphate)lysine mark.

Belongs to the class-II pyridoxal-phosphate-dependent aminotransferase family. Histidinol-phosphate aminotransferase subfamily. Homodimer. The cofactor is pyridoxal 5'-phosphate. In terms of tissue distribution, expressed in both vegetative and reproductive tissues.

Its subcellular location is the plastid. It localises to the chloroplast. It catalyses the reaction L-histidinol phosphate + 2-oxoglutarate = 3-(imidazol-4-yl)-2-oxopropyl phosphate + L-glutamate. Its pathway is amino-acid biosynthesis; L-histidine biosynthesis; L-histidine from 5-phospho-alpha-D-ribose 1-diphosphate: step 7/9. The sequence is that of Histidinol-phosphate aminotransferase 1, chloroplastic (HISN6A) from Arabidopsis thaliana (Mouse-ear cress).